We begin with the raw amino-acid sequence, 64 residues long: uncharacterized protein (64 aa).

This is an uncharacterized protein from Sulfolobus islandicus rod-shaped virus 1 (SIRV-1).